Here is a 667-residue protein sequence, read N- to C-terminus: tRNA uridine 5-carboxymethylaminomethyl modification enzyme MnmG (667 aa).

13 to 18 (GGGHAG) is a binding site for FAD. Residue 280–294 (GPRYCPSVEDKINRF) participates in NAD(+) binding.

The protein belongs to the MnmG family. As to quaternary structure, homodimer. Heterotetramer of two MnmE and two MnmG subunits. The cofactor is FAD.

The protein localises to the cytoplasm. Its function is as follows. NAD-binding protein involved in the addition of a carboxymethylaminomethyl (cmnm) group at the wobble position (U34) of certain tRNAs, forming tRNA-cmnm(5)s(2)U34. This Polaromonas naphthalenivorans (strain CJ2) protein is tRNA uridine 5-carboxymethylaminomethyl modification enzyme MnmG.